We begin with the raw amino-acid sequence, 505 residues long: Putative F-box protein At1g58310 (505 aa).

The 49-residue stretch at 7–55 (RDIISGLPDSLLCHILSFLNTKEAASTSVLAKKWRYLFASVPNLDFDDS) folds into the F-box domain.

The sequence is that of Putative F-box protein At1g58310 from Arabidopsis thaliana (Mouse-ear cress).